The primary structure comprises 238 residues: Protein shisa-3 homolog (238 aa).

Positions Met1–Ala21 are cleaved as a signal peptide. Topologically, residues Gln22–Pro98 are lumenal. Residues Phe99 to Tyr119 traverse the membrane as a helical segment. Residues Cys120–Ser238 are Cytoplasmic-facing. The segment at Thr151 to Gly173 is disordered. Residues Ser159–Gly173 are compositionally biased toward low complexity.

This sequence belongs to the shisa family.

It localises to the endoplasmic reticulum membrane. Functionally, plays an essential role in the maturation of presomitic mesoderm cells by individual attenuation of both FGF and WNT signaling. The polypeptide is Protein shisa-3 homolog (SHISA3) (Homo sapiens (Human)).